Here is a 785-residue protein sequence, read N- to C-terminus: MIKVNRYEIFLDFSFQTGDYKGYEKIEMESDEETVVLDAVGLKIVKAKVNGKEIEFSQDESRVNVKSGSFSGILEVEFEGKVTERKLVGIYKASYKDGYVISTQFEATHARDFIPCFDHPAMKARFKLTVRVDKGLKVISNMPVVREKEENGKVVYEFDETPKMSTYLLYLGIGNFEEIRDEGKIPTIIVATIPGKVQKGRFSMQISRNSIEFYEKYFEIPYQLPKVHLIAIPEFAYGAMENWGAITFRETALLADDSSSVYQKFRVAEVVAHELAHQWFGNLVTLKWWDDLWLNESFATFMSHKAISQLFPSWNFWDYFVLNQTSRALEKDSVSTTHPIEAHVRDPNEVEQMFDDISYGKGASILRMIEAYVGEENFRRGVVNYLKKFSYSNAQGSDLWNSISEVYGSDISPIMADWITKPGYPMVRVSVSGKRVSLEQERFSLIGNVENLLYKIPLTMEVNGKVVTHLLDKERDTMVFEEDVKSLKVNVNRTGFYRVFYYNNSDLVFNSNLSELDKWGIINDYWAFLLAGKIGFKEYERVISKFFNDKDFLPVNELSNELFTLHAINPDKYQGIAKEFHRIQLKNWRNSKDELGRLTYSNILYRLAAIDDEFSLGLSELFRFYGSLDSDTRQGVAVAYAITYEDNSVDELLERFRKETFDEEKLRYLTAMLFFRKPYLVGNTLSLILSGEIKKQDIPLTLSTAAYNPYAKSAVLNWIKMHINFMREAYKGTGILGRRLAEVIPLIGIGAERETEQFFSNLNMPEAERGIGTGLELLKAYSRLK.

Substrate is bound by residues Glu-106 and 238–242 (GAMEN). A Zn(2+)-binding site is contributed by His-273. Residue Glu-274 is the Proton acceptor of the active site. Zn(2+) contacts are provided by His-277 and Glu-296.

It belongs to the peptidase M1 family. As to quaternary structure, co-immunoprecipitates with the 60 kDa chaperonin. The cofactor is Zn(2+). Can be phosphorylated by cell extracts.

It localises to the cytoplasm. It catalyses the reaction Release of an N-terminal amino acid, Xaa-|-Yaa-, in which Xaa is preferably Leu, but may be other amino acids including Pro although not Arg or Lys, and Yaa may be Pro. Amino acid amides and methyl esters are also readily hydrolyzed, but rates on arylamides are exceedingly low.. Its function is as follows. Preferentially acts as a leucyl-aminopeptidase, although it also has activity against other substrates. The protein is Leucyl aminopeptidase (ape2) of Saccharolobus solfataricus (strain ATCC 35092 / DSM 1617 / JCM 11322 / P2) (Sulfolobus solfataricus).